A 305-amino-acid polypeptide reads, in one-letter code: tRNA pseudouridine synthase B (305 aa).

Residue Asp39 is the Nucleophile of the active site.

The protein belongs to the pseudouridine synthase TruB family. Type 1 subfamily.

It catalyses the reaction uridine(55) in tRNA = pseudouridine(55) in tRNA. Responsible for synthesis of pseudouridine from uracil-55 in the psi GC loop of transfer RNAs. This is tRNA pseudouridine synthase B from Staphylococcus aureus (strain Mu50 / ATCC 700699).